A 460-amino-acid chain; its full sequence is MDSIVTTEDTIAAIASAISIGKGGVAIIRVSGKDSINSCKKIVQTKSKYAWESHRVFHGFIQENKQNKFIDEVLISVMKSPNSFTGEDVVELHCHGGIIIVNKVLKILLSSNSRVRLANPGEFSQRAFLNGKIDLTQAESINQLINASNTRSAELAFSGIQGEIKKKINDIKNDLINQLCEIEARVDFEEDFTDFDYTKYLKNIKKVKEKIELLIENAKRNSYIHNGISIALIGKTNVGKSSLLNLLAKKEKAIVTNIPGTTRDVIEINLTINDIPMKIIDTAGIRETSEQIERIGIKKSFRKIKESDFIIYIYSLEEGFNEEDKKIIQEIPKEKLITILGNKKDLIDCKNINSNELKNTILMSIKNNDGERLLIDTIIKKCGLKQVENINIFLNERHLANLSACLSNLNDTDEIIKNKLPFDLLSIELRDGIQNLSKITGQELTEELLDNIFSKFCIGK.

Positions 29, 91, and 132 each coordinate (6S)-5-formyl-5,6,7,8-tetrahydrofolate. Residues 227 to 383 (GISIALIGKT…LIDTIIKKCG (157 aa)) enclose the TrmE-type G domain. K(+) is bound at residue N237. GTP contacts are provided by residues 237–242 (NVGKSS), 256–262 (TNIPGTT), and 281–284 (DTAG). Residue S241 participates in Mg(2+) binding. Positions 256, 258, and 261 each coordinate K(+). Residue T262 coordinates Mg(2+). K460 serves as a coordination point for (6S)-5-formyl-5,6,7,8-tetrahydrofolate.

It belongs to the TRAFAC class TrmE-Era-EngA-EngB-Septin-like GTPase superfamily. TrmE GTPase family. Homodimer. Heterotetramer of two MnmE and two MnmG subunits. It depends on K(+) as a cofactor.

The protein localises to the cytoplasm. Functionally, exhibits a very high intrinsic GTPase hydrolysis rate. Involved in the addition of a carboxymethylaminomethyl (cmnm) group at the wobble position (U34) of certain tRNAs, forming tRNA-cmnm(5)s(2)U34. The chain is tRNA modification GTPase MnmE from Prochlorococcus marinus (strain MIT 9215).